Consider the following 328-residue polypeptide: Phenylalanine--tRNA ligase alpha subunit (328 aa).

Residue E245 participates in Mg(2+) binding.

This sequence belongs to the class-II aminoacyl-tRNA synthetase family. Phe-tRNA synthetase alpha subunit type 1 subfamily. Tetramer of two alpha and two beta subunits. The cofactor is Mg(2+).

Its subcellular location is the cytoplasm. The enzyme catalyses tRNA(Phe) + L-phenylalanine + ATP = L-phenylalanyl-tRNA(Phe) + AMP + diphosphate + H(+). This is Phenylalanine--tRNA ligase alpha subunit from Helicobacter acinonychis (strain Sheeba).